The following is a 448-amino-acid chain: Beta-glucosidase A (448 aa).

The active-site Proton donor is the E166. The active-site Nucleophile is E355.

It belongs to the glycosyl hydrolase 1 family.

The enzyme catalyses Hydrolysis of terminal, non-reducing beta-D-glucosyl residues with release of beta-D-glucose.. Its pathway is glycan metabolism; cellulose degradation. This is Beta-glucosidase A (bglA) from Acetivibrio thermocellus (strain ATCC 27405 / DSM 1237 / JCM 9322 / NBRC 103400 / NCIMB 10682 / NRRL B-4536 / VPI 7372) (Clostridium thermocellum).